The primary structure comprises 274 residues: Large ribosomal subunit protein uL2 (274 aa).

Disordered regions lie at residues Lys38–Gly57 and Ala224–Lys256. A compositionally biased stretch (basic and acidic residues) spans Asp229–Asn239.

Belongs to the universal ribosomal protein uL2 family. In terms of assembly, part of the 50S ribosomal subunit. Forms a bridge to the 30S subunit in the 70S ribosome.

In terms of biological role, one of the primary rRNA binding proteins. Required for association of the 30S and 50S subunits to form the 70S ribosome, for tRNA binding and peptide bond formation. It has been suggested to have peptidyltransferase activity; this is somewhat controversial. Makes several contacts with the 16S rRNA in the 70S ribosome. In Acinetobacter baumannii (strain AB307-0294), this protein is Large ribosomal subunit protein uL2.